Reading from the N-terminus, the 488-residue chain is Glutamate--tRNA ligase (488 aa).

The 'HIGH' region motif lies at 16 to 26 (PSPTGEPHVGT). The 'KMSKS' region motif lies at 257–261 (KLSKR). An ATP-binding site is contributed by lysine 260.

It belongs to the class-I aminoacyl-tRNA synthetase family. Glutamate--tRNA ligase type 1 subfamily. Monomer.

It localises to the cytoplasm. It carries out the reaction tRNA(Glu) + L-glutamate + ATP = L-glutamyl-tRNA(Glu) + AMP + diphosphate. Catalyzes the attachment of glutamate to tRNA(Glu) in a two-step reaction: glutamate is first activated by ATP to form Glu-AMP and then transferred to the acceptor end of tRNA(Glu). The polypeptide is Glutamate--tRNA ligase (Rhizobium johnstonii (strain DSM 114642 / LMG 32736 / 3841) (Rhizobium leguminosarum bv. viciae)).